The primary structure comprises 187 residues: Ribonuclease HII (187 aa).

The RNase H type-2 domain occupies Met1–Glu187. Residues Asp7, Glu8, and Asp99 each coordinate a divalent metal cation.

Belongs to the RNase HII family. Mn(2+) serves as cofactor. Requires Mg(2+) as cofactor.

The protein resides in the cytoplasm. The catalysed reaction is Endonucleolytic cleavage to 5'-phosphomonoester.. Its function is as follows. Endonuclease that specifically degrades the RNA of RNA-DNA hybrids. The polypeptide is Ribonuclease HII (Francisella tularensis subsp. holarctica (strain FTNF002-00 / FTA)).